We begin with the raw amino-acid sequence, 319 residues long: Cell division protein PomZ (319 aa).

61 to 68 is an ATP binding site; that stretch reads KGGTGKTS.

This sequence belongs to the ParA family. As to quaternary structure, interacts with FtsZ in pull-down experiments.

The protein resides in the cytoplasm. Functionally, spatial regulator of cell division that is involved in identifying the incipient division site, recruiting FtsZ to the division site and stabilizing the Z-ring. Binds ATP and GTP. This is Cell division protein PomZ from Myxococcus xanthus (strain DK1622).